Reading from the N-terminus, the 480-residue chain is Cysteine--tRNA ligase (480 aa).

Residue C29 coordinates Zn(2+). The 'HIGH' region motif lies at P31–H41. Zn(2+) is bound by residues C221, H246, and E250. The 'KMSKS' region motif lies at K278–S282. An ATP-binding site is contributed by K281.

This sequence belongs to the class-I aminoacyl-tRNA synthetase family. Monomer. Requires Zn(2+) as cofactor.

It is found in the cytoplasm. The enzyme catalyses tRNA(Cys) + L-cysteine + ATP = L-cysteinyl-tRNA(Cys) + AMP + diphosphate. This Chlorobium chlorochromatii (strain CaD3) protein is Cysteine--tRNA ligase.